The following is a 313-amino-acid chain: Glyoxylate/hydroxypyruvate reductase A (313 aa).

The active site involves Arg228. His276 functions as the Proton donor in the catalytic mechanism.

It belongs to the D-isomer specific 2-hydroxyacid dehydrogenase family. GhrA subfamily.

The protein resides in the cytoplasm. The enzyme catalyses glycolate + NADP(+) = glyoxylate + NADPH + H(+). It catalyses the reaction (R)-glycerate + NAD(+) = 3-hydroxypyruvate + NADH + H(+). The catalysed reaction is (R)-glycerate + NADP(+) = 3-hydroxypyruvate + NADPH + H(+). Catalyzes the NADPH-dependent reduction of glyoxylate and hydroxypyruvate into glycolate and glycerate, respectively. In Serratia proteamaculans (strain 568), this protein is Glyoxylate/hydroxypyruvate reductase A.